The sequence spans 471 residues: MDKPRVRFAPSPTGYLHIGGARTALFNWLWARRNGGTFVLRIEDTDRERSTQAAVDAIFDGLRWLGLDWDEGPDVGGPHGPYFQTQRLEIYKTHAEKLIREGKAYACYCTKDVLDAQRKQAEAEKRQFRYPGTCRELPYDPSRPHVIRFRVPQTGSKTFVDLVKGPIETPYEVLQDEVILRGDGVPLYNFGAVVDDVTMAINLVARGDDHVNNTARQILMYEALGYPAPRFAHLPMILGADKTRLSKRHGATSVTAYRDMGYLPEAVVNYLVRLGWSHGDQELFTRDELVRFFDFKDVGATAGVFNQDKMAWVNHEWLKKLSDEELARRALPYFQAAGLPAADDAKLRHVCAVARERARTFGEYVQQFRYFYAPVQLDPKAKDKFLTQDTRPILEAIRAGIAALEALETAALEKLFHDEAAKRGLGLGKVAQPVRVALTGGTASPGMYDVLQILGKDEALRRLDDALRIIG.

A 'HIGH' region motif is present at residues 10-20 (PSPTGYLHIGG). Zn(2+) contacts are provided by Cys-107, Cys-109, Cys-134, and Glu-136. Positions 244–248 (RLSKR) match the 'KMSKS' region motif. Lys-247 contacts ATP.

This sequence belongs to the class-I aminoacyl-tRNA synthetase family. Glutamate--tRNA ligase type 1 subfamily. In terms of assembly, monomer. Requires Zn(2+) as cofactor.

The protein localises to the cytoplasm. The catalysed reaction is tRNA(Glu) + L-glutamate + ATP = L-glutamyl-tRNA(Glu) + AMP + diphosphate. Functionally, catalyzes the attachment of glutamate to tRNA(Glu) in a two-step reaction: glutamate is first activated by ATP to form Glu-AMP and then transferred to the acceptor end of tRNA(Glu). The chain is Glutamate--tRNA ligase from Anaeromyxobacter sp. (strain Fw109-5).